We begin with the raw amino-acid sequence, 288 residues long: Inositol monophosphatase 2 (288 aa).

Glutamate 81, aspartate 101, isoleucine 103, and aspartate 104 together coordinate Mg(2+). Glutamate 81 is a binding site for substrate. Residues isoleucine 103–threonine 106, glycine 205–serine 207, glutamine 224, and aspartate 231 each bind substrate. Aspartate 231 contributes to the Mg(2+) binding site.

The protein belongs to the inositol monophosphatase superfamily. As to quaternary structure, homodimer. Mg(2+) is required as a cofactor.

It is found in the cytoplasm. The catalysed reaction is a myo-inositol phosphate + H2O = myo-inositol + phosphate. It catalyses the reaction 1D-myo-inositol 1-phosphate + H2O = myo-inositol + phosphate. It carries out the reaction 1D-myo-inositol 2-phosphate + H2O = myo-inositol + phosphate. The enzyme catalyses 1D-myo-inositol 3-phosphate + H2O = myo-inositol + phosphate. The catalysed reaction is 1D-myo-inositol 4-phosphate + H2O = myo-inositol + phosphate. It catalyses the reaction 1D-myo-inositol 5-phosphate + H2O = myo-inositol + phosphate. It carries out the reaction 1D-myo-inositol 6-phosphate + H2O = myo-inositol + phosphate. The enzyme catalyses alpha-D-glucose 1-phosphate + H2O = D-glucose + phosphate. The catalysed reaction is glycerol 2-phosphate + H2O = glycerol + phosphate. It catalyses the reaction adenosine 2'-phosphate + H2O = adenosine + phosphate. It participates in polyol metabolism; myo-inositol biosynthesis; myo-inositol from D-glucose 6-phosphate: step 2/2. With respect to regulation, inhibited by high Li(+) and restricted Mg(2+) concentrations. Its function is as follows. Phosphatase that can use myo-inositol monophosphates, myo-inositol 1,4-diphosphate, scyllo-inositol-1,4-diphosphate, glucose-1-phosphate, beta-glycerophosphate and 2'-AMP as substrates in vitro. It is likely that IMPA2 has an as yet unidentified in vivo substrate(s). Has been implicated as the pharmacological target for lithium (Li(+)) action in brain. The protein is Inositol monophosphatase 2 of Homo sapiens (Human).